The following is a 93-amino-acid chain: Putative pterin-4-alpha-carbinolamine dehydratase (93 aa).

The protein belongs to the pterin-4-alpha-carbinolamine dehydratase family.

The enzyme catalyses (4aS,6R)-4a-hydroxy-L-erythro-5,6,7,8-tetrahydrobiopterin = (6R)-L-erythro-6,7-dihydrobiopterin + H2O. The chain is Putative pterin-4-alpha-carbinolamine dehydratase from Nostoc sp. (strain PCC 7120 / SAG 25.82 / UTEX 2576).